The sequence spans 83 residues: MAVKIRLARMGAKKKPFYRIVVSDSESPRDGRFLEIVGNYDPGKDPAEVNVKESRLLEWLSKGAKPTLTVSQLLQKKGIKVGA.

Belongs to the bacterial ribosomal protein bS16 family.

The sequence is that of Small ribosomal subunit protein bS16 from Syntrophus aciditrophicus (strain SB).